Consider the following 62-residue polypeptide: uncharacterized protein (62 aa).

4Fe-4S ferredoxin-type domains follow at residues 2–31 (AVTI…EIEG) and 32–62 (DKVV…VEPE). [4Fe-4S] cluster is bound by residues cysteine 10, cysteine 15, cysteine 18, cysteine 22, cysteine 42, cysteine 45, cysteine 48, and cysteine 52.

The cofactor is [4Fe-4S] cluster.

This is an uncharacterized protein from Methanocaldococcus jannaschii (strain ATCC 43067 / DSM 2661 / JAL-1 / JCM 10045 / NBRC 100440) (Methanococcus jannaschii).